Reading from the N-terminus, the 507-residue chain is Keratin, type II cuticular Hb5 (507 aa).

Residues 1 to 123 (MSCRSYRISS…PNAQCVKQEE (123 aa)) form a head region. Residues 123–434 (EKEQIKSLNS…RLLEGEEHRL (312 aa)) form the IF rod domain. Residues 124–158 (KEQIKSLNSRFAAFIDKVRFLEQQNKLLETKWQFY) form a coil 1A region. Residues 159-168 (QNQRCCESNL) form a linker 1 region. Residues 169–269 (EPLFSGYIET…YEEEIRVLQA (101 aa)) form a coil 1B region. A Glycyl lysine isopeptide (Lys-Gly) (interchain with G-Cter in SUMO1) cross-link involves residue Lys229. Positions 270 to 286 (HISDTSVIVKMDNSRDL) are linker 12. A coil 2 region spans residues 287 to 430 (NMDCIIAEIK…ATYRRLLEGE (144 aa)). The tract at residues 431–507 (EHRLCEGVGS…CGSSRSVRFA (77 aa)) is tail.

It belongs to the intermediate filament family. Heterotetramer of two type I and two type II keratins. In terms of tissue distribution, synthesis occurs immediately above a small population of matrix cells at the base of the hair bulb and the trichocytes lining the dermal papilla and extends upward through the matrix and ends in the lower part of the cortex of the hair shaft.

In Homo sapiens (Human), this protein is Keratin, type II cuticular Hb5 (KRT85).